A 420-amino-acid chain; its full sequence is Amino acid decarboxylase lolD1 (420 aa).

K62 bears the N6-(pyridoxal phosphate)lysine mark. Residues S194, G231, and 266–269 contribute to the pyridoxal 5'-phosphate site; that span reads EPGT. Residue 315-316 participates in substrate binding; the sequence is IV. C351 functions as the Proton donor; shared with dimeric partner in the catalytic mechanism. C351 is modified (S-nitrosocysteine). D352 is a substrate binding site. A pyridoxal 5'-phosphate-binding site is contributed by Y381.

Belongs to the Orn/Lys/Arg decarboxylase class-II family. As to quaternary structure, homodimer. Pyridoxal 5'-phosphate is required as a cofactor.

Its pathway is alkaloid biosynthesis. Functionally, amino acid decarboxylase; part of the gene cluster that mediates the biosynthesis of loline alkaloids, potent insecticidal agents composed of a pyrrolizidine ring system and an uncommon ether bridge linking carbons 2 and 7. Lolines are structurally differentiated by the various modifications of the L-amino group and include norloline, loline, N-methylloline, N-acetylloline, N-acetylnorloline, and N-formylloline. The first committed step is the condensation of O-acetyl-L-homoserine (derived from L-aspartic acid) and L-proline, probably catalyzed by the gamma-type pyridoxal 5'-phosphate(PLP)-dependent enzyme lolC, to give the diamino diacid, NACPP. Ensuing cyclization, decarboxylation, and acetylation steps yield 1-exo-acetamidopyrrolizidine (AcAP). LolO is required for installation of the ether bridge upon the pathway intermediate, 1-exo-acetamidopyrrolizidine (AcAP). In sequential 2-oxoglutarate- and O(2)-consuming steps, lolO removes hydrogens from C2 and C7 of AcAP to form both carbon-oxygen bonds in N-acetylnorloline (NANL), the precursor to all other lolines. The enzymes lolD, lolE, lolF and lolT have also been proposed to be involved in the ether-bridge installation. Further processing of the exocyclic moiety of NANL by fungal N-acetamidase (LolN), methyltransferase (LolM), and cytochrome P450 (LolP) enzymes, with occasional involvement of a plant acetyltransferase, generates the other known lolines. LolN transforms NANL to norlonine which is monomethylated and dimethylated to respectively lonine and N-methyllonine (NML) by lolM. LolP catalyzes hydroxylation of the methyl group in N-methylloline (NML) and further oxygenation to N-formylloline (NFL). A plant acetyltransferase is responsible for the acetylation of loline to form N-acetylloline (NAL). LolA might interact with aspartate kinase to prevent feedback inhibition of its activity by these end products and thereby promote production of L-homoserine from L-aspartate. The chain is Amino acid decarboxylase lolD1 from Epichloe uncinata (Endophyte fungus).